The sequence spans 89 residues: Large ribosomal subunit protein eL31 (89 aa).

The protein belongs to the eukaryotic ribosomal protein eL31 family.

The protein is Large ribosomal subunit protein eL31 of Picrophilus torridus (strain ATCC 700027 / DSM 9790 / JCM 10055 / NBRC 100828 / KAW 2/3).